The primary structure comprises 90 residues: Putative membrane protein insertion efficiency factor (90 aa).

The tract at residues 68-90 (VPAHFSLRRNPQYKEEDHRGKKR) is disordered. Over residues 79 to 90 (QYKEEDHRGKKR) the composition is skewed to basic and acidic residues.

The protein belongs to the UPF0161 family.

It is found in the cell membrane. In terms of biological role, could be involved in insertion of integral membrane proteins into the membrane. The chain is Putative membrane protein insertion efficiency factor from Lactiplantibacillus plantarum (strain ATCC BAA-793 / NCIMB 8826 / WCFS1) (Lactobacillus plantarum).